A 452-amino-acid chain; its full sequence is Keratin, type II cytoskeletal 80 (452 aa).

Residues 1-82 form a head region; sequence MAYRSCVVGF…DPAVQQQKNQ (82 aa). Position 45 is a phosphoserine (serine 45). The interval 82-118 is coil 1A; that stretch reads QEKEEMKVLNDKFASLIGKVQALEQRNQLLETRWGFL. One can recognise an IF rod domain in the interval 83–394; the sequence is EKEEMKVLND…KLMEGEESRM (312 aa). The tract at residues 119–135 is linker 1; sequence QGQGSATFDLSHHYETF. The coil 1B stretch occupies residues 136–227; it reads QGRLQEELRK…TVYEQELKDL (92 aa). The segment at 228 to 251 is linker 12; sequence TAQVKDVSVTVGLDSRCHIDLSGI. The segment at 252 to 390 is coil 2; that stretch reads VEEVKAQYDA…ATYHKLMEGE (139 aa). The tail stretch occupies residues 391 to 452; it reads ESRMDLPSTT…YLSQESEASE (62 aa). Composition is skewed to polar residues over residues 411–421 and 443–452; these read TTASKSGLSKT and YLSQESEASE. A disordered region spans residues 411-452; sequence TTASKSGLSKTPSRKKKNRGGPVIKITEMSEKYLSQESEASE.

The protein belongs to the intermediate filament family. In terms of assembly, heterotetramer of two type I and two type II keratins.

This Rattus norvegicus (Rat) protein is Keratin, type II cytoskeletal 80 (Krt80).